We begin with the raw amino-acid sequence, 214 residues long: Uracil phosphoribosyltransferase (214 aa).

Residues R107 and D135–T143 each bind 5-phospho-alpha-D-ribose 1-diphosphate. Uracil-binding positions include I198 and G203–A205. Residue D204 participates in 5-phospho-alpha-D-ribose 1-diphosphate binding.

It belongs to the UPRTase family. It depends on Mg(2+) as a cofactor.

The enzyme catalyses UMP + diphosphate = 5-phospho-alpha-D-ribose 1-diphosphate + uracil. It functions in the pathway pyrimidine metabolism; UMP biosynthesis via salvage pathway; UMP from uracil: step 1/1. With respect to regulation, allosterically activated by GTP. Functionally, catalyzes the conversion of uracil and 5-phospho-alpha-D-ribose 1-diphosphate (PRPP) to UMP and diphosphate. The chain is Uracil phosphoribosyltransferase from Aeropyrum pernix (strain ATCC 700893 / DSM 11879 / JCM 9820 / NBRC 100138 / K1).